Here is an 89-residue protein sequence, read N- to C-terminus: Large ribosomal subunit protein uL30 (89 aa).

It belongs to the universal ribosomal protein uL30 family. In terms of assembly, part of the 50S ribosomal subunit.

The sequence is that of Large ribosomal subunit protein uL30 from Myxococcus xanthus (strain DK1622).